Here is an 842-residue protein sequence, read N- to C-terminus: Synaptonemal complex protein 2-like (842 aa).

Disordered regions lie at residues 451 to 473, 505 to 560, 619 to 666, and 715 to 738; these read GSLEITNTEERSLENSKQDEPEQ, FARD…KQRV, STQK…SSLE, and EDAPGSPVVTDTSTPSQEDMPGSV. 2 stretches are compositionally biased toward basic and acidic residues: residues 458 to 470 and 505 to 525; these read TEERSLENSKQDE and FARDREQDRRMPFNDRNHDLL. Residues 543–559 are compositionally biased toward basic residues; sequence NHKRKSLRTYSQRKKQR. 2 stretches are compositionally biased toward basic and acidic residues: residues 624–633 and 643–655; these read GLEKPERRGS and RVTDGLHWREPRS.

Belongs to the SYCP2 family. As to expression, specifically expressed in oocytes.

It localises to the nucleus. The protein localises to the chromosome. It is found in the centromere. Oocyte-specific protein that localizes to centromeres at the dictyate stage and regulates the survival of primordial oocytes. In Mus musculus (Mouse), this protein is Synaptonemal complex protein 2-like.